A 95-amino-acid polypeptide reads, in one-letter code: Small ribosomal subunit protein uS19 (95 aa).

Belongs to the universal ribosomal protein uS19 family.

Protein S19 forms a complex with S13 that binds strongly to the 16S ribosomal RNA. In Clostridium kluyveri (strain NBRC 12016), this protein is Small ribosomal subunit protein uS19.